The primary structure comprises 1157 residues: Folliculin-interacting protein 1 (1157 aa).

The uDENN FNIP1/2-type domain maps to 37 to 467 (FDPSQIRLIV…TVMPNGQPPI (431 aa)). Disordered regions lie at residues 92–120 (PGGD…CPKY), 616–665 (SQQE…TKVE), 769–796 (SPPT…NRDC), and 904–955 (VPHG…NYYG). Residues 95–111 (DSSSSLDSSINSSSSFS) are compositionally biased toward low complexity. Residues 475 to 1083 (SSQSVDMLAK…VSNLLHSTLQ (609 aa)) enclose the cDENN FNIP1/2-type domain. The segment covering 651–664 (ADGHQPRTCQDTKV) has biased composition (basic and acidic residues). Positions 904 to 916 (VPHGDRENAEKKV) are enriched in basic and acidic residues. One can recognise a dDENN FNIP1/2-type domain in the interval 1093–1148 (FCVMHLEDRLQELYFKSKMLSEYLKGQMRVHVKELGVVLGIESSDLPLLAAVASTH).

Belongs to the FNIP family. In terms of assembly, homodimer and homomultimer. Heterodimer and heteromultimer with FNIP2. Component of the lysosomal folliculin complex (LFC).

It localises to the lysosome membrane. Its subcellular location is the cytoplasm. It is found in the cytosol. In terms of biological role, binding partner of the GTPase-activating protein FLCN: involved in the cellular response to amino acid availability by regulating the non-canonical mTORC1 signaling cascade controlling the MiT/TFE factors TFEB and TFE3. Required to promote FLCN recruitment to lysosomes and interaction with Rag GTPases, leading to activation of the non-canonical mTORC1 signaling. In low-amino acid conditions, component of the lysosomal folliculin complex (LFC) on the membrane of lysosomes, which inhibits the GTPase-activating activity of FLCN, thereby inactivating mTORC1 and promoting nuclear translocation of TFEB and TFE3. Upon amino acid restimulation, disassembly of the LFC complex liberates the GTPase-activating activity of FLCN, leading to activation of mTORC1 and subsequent inactivation of TFEB and TFE3. In addition to its role in mTORC1 signaling, also acts as a co-chaperone of HSP90AA1/Hsp90: inhibits the ATPase activity of HSP90AA1/Hsp90, leading to activate both kinase and non-kinase client proteins of HSP90AA1/Hsp90. Acts as a scaffold to load client protein FLCN onto HSP90AA1/Hsp90. The protein is Folliculin-interacting protein 1 of Gallus gallus (Chicken).